Consider the following 260-residue polypeptide: NAD-capped RNA hydrolase NudC (260 aa).

Arg-69 lines the substrate pocket. Zn(2+) is bound by residues Cys-98 and Cys-101. Glu-111 lines the substrate pocket. Zn(2+)-binding residues include Cys-116 and Cys-119. Substrate is bound at residue Tyr-124. Residues 125-248 form the Nudix hydrolase domain; it reads PQIAPCIIVA…TVARRLIEDT (124 aa). Residues Ala-158, Glu-174, and Glu-178 each contribute to the a divalent metal cation site. The short motif at 159 to 180 is the Nudix box element; it reads GFVEVGETLEQTVVREVMEESQ. Position 192–199 (192–199) interacts with substrate; the sequence is QPWPFPHS. Glu-219 contacts a divalent metal cation. Substrate is bound at residue Ala-241.

This sequence belongs to the Nudix hydrolase family. NudC subfamily. In terms of assembly, homodimer. Mg(2+) is required as a cofactor. Mn(2+) serves as cofactor. Requires Zn(2+) as cofactor.

It catalyses the reaction a 5'-end NAD(+)-phospho-ribonucleoside in mRNA + H2O = a 5'-end phospho-adenosine-phospho-ribonucleoside in mRNA + beta-nicotinamide D-ribonucleotide + 2 H(+). It carries out the reaction NAD(+) + H2O = beta-nicotinamide D-ribonucleotide + AMP + 2 H(+). The enzyme catalyses NADH + H2O = reduced beta-nicotinamide D-ribonucleotide + AMP + 2 H(+). MRNA decapping enzyme that specifically removes the nicotinamide adenine dinucleotide (NAD) cap from a subset of mRNAs by hydrolyzing the diphosphate linkage to produce nicotinamide mononucleotide (NMN) and 5' monophosphate mRNA. The NAD-cap is present at the 5'-end of some mRNAs and stabilizes RNA against 5'-processing. Has preference for mRNAs with a 5'-end purine. Catalyzes the hydrolysis of a broad range of dinucleotide pyrophosphates. This is NAD-capped RNA hydrolase NudC from Pectobacterium carotovorum subsp. carotovorum (strain PC1).